The sequence spans 75 residues: U6-lycotoxin-Ls1e (75 aa).

A signal peptide spans 1–21 (MKLLLFTALVLVVISLIEVEA). A propeptide spanning residues 22-25 (ENER) is cleaved from the precursor.

The protein belongs to the neurotoxin 19 (CSTX) family. 06 (U6-Lctx) subfamily. In terms of processing, contains 4 disulfide bonds. Expressed by the venom gland.

The protein resides in the secreted. This chain is U6-lycotoxin-Ls1e, found in Lycosa singoriensis (Wolf spider).